A 594-amino-acid polypeptide reads, in one-letter code: KIF-binding protein (594 aa).

It belongs to the KIF-binding protein family.

It is found in the cytoplasm. It localises to the cytoskeleton. Activator of KIF1B plus-end-directed microtubule motor activity. Required for organization of axonal microtubules, and axonal outgrowth and maintenance during peripheral and central nervous system development. This is KIF-binding protein (Kifbp) from Gallus gallus (Chicken).